Here is a 534-residue protein sequence, read N- to C-terminus: Neryl diphosphate diphosphatase, chloroplastic (534 aa).

The Mg(2+) site is built by D272, D276, D416, and E424. The DDXXD motif motif lies at 272 to 276; sequence DDIFD.

It belongs to the terpene synthase family. Mg(2+) serves as cofactor.

Its subcellular location is the plastid. It is found in the chloroplast. The catalysed reaction is neryl diphosphate + H2O = nerol + diphosphate. It participates in secondary metabolite biosynthesis; terpenoid biosynthesis. Functionally, monoterpene synthase that catalyzes the hydrolysis of neryl diphosphate (NPP) to form nerol and diphosphate. Is specific for NPP and has no hydrolase activity toward geranyl diphosphate (GPP) or farnesyl diphosphate (FPP). The monoterpene nerol may have an insect repellent effect for the plant leaves. The chain is Neryl diphosphate diphosphatase, chloroplastic from Glycine max (Soybean).